The following is a 495-amino-acid chain: Catalase (495 aa).

Residues 1-25 (MSNNKKLTSLFGAPVSDRENSMTAG) form a disordered region. Catalysis depends on residues His-55 and Asn-128. Tyr-338 is a binding site for heme.

Belongs to the catalase family. Homodimer. Heme is required as a cofactor.

It catalyses the reaction 2 H2O2 = O2 + 2 H2O. Its function is as follows. Decomposes hydrogen peroxide into water and oxygen; serves to protect cells from the toxic effects of hydrogen peroxide. In Staphylococcus saprophyticus subsp. saprophyticus (strain ATCC 15305 / DSM 20229 / NCIMB 8711 / NCTC 7292 / S-41), this protein is Catalase (katA).